The chain runs to 1137 residues: Nonsense-mediated mRNA decay factor SMG7 (1137 aa).

At Ser2 the chain carries N-acetylserine. TPR repeat units lie at residues 152-185 (QHCLVHLGDIARYRNQTSQAESYYRHAAQLVPSN) and 187-219 (QPYNQLAILASSKGDHLTTIFYYCRSIAVKFPF). Ser520 bears the Phosphoserine mark. The segment covering 620–631 (ELRKTPVSEARK) has biased composition (basic and acidic residues). 6 disordered regions span residues 620 to 646 (ELRKTPVSEARKTPVTQTPTQASNSQF), 696 to 794 (LQPT…YQQA), 890 to 911 (IDRRGKRSPGVFRPEQDPVPRM), 988 to 1055 (PSLP…AMGG), 1069 to 1089 (SSWHQASTPSGTWTGHGPSME), and 1104 to 1137 (SSSMMHPGPSALEQLLMQQKQKQQRGQGTMNPPH). Phosphothreonine is present on Thr624. 2 stretches are compositionally biased toward polar residues: residues 633-646 (PVTQTPTQASNSQF) and 696-722 (LQPTAHSPAGNQVQAGKQSHIPYSQQR). Residues 723 to 770 (PSGPGPMNQGPQQSQPPSQQPLTSLPAQPTAQSTSQLQVQALTQQQQS) show a composition bias toward low complexity. Ser781 and Ser897 each carry phosphoserine. Residues 988–998 (PSLPASSDHST) show a composition bias toward polar residues. Over residues 999–1025 (PASQSPHSSNPSSLPSSPPTHNHNSVP) the composition is skewed to low complexity. The segment covering 1036-1050 (DNRDRRTADRWKTDK) has biased composition (basic and acidic residues). Residues 1069–1081 (SSWHQASTPSGTW) are compositionally biased toward polar residues. The segment covering 1117 to 1131 (QLLMQQKQKQQRGQG) has biased composition (low complexity).

Part of a complex that contains SMG5, SMG7, PPP2CA, a short isoform of UPF3A (isoform UPF3AS, but not isoform UPF3AL) and phosphorylated UPF1. Interacts with DHX34; the interaction is RNA-independent.

The protein resides in the cytoplasm. It localises to the nucleus. In terms of biological role, plays a role in nonsense-mediated mRNA decay. Recruits UPF1 to cytoplasmic mRNA decay bodies. Together with SMG5 is thought to provide a link to the mRNA degradation machinery involving exonucleolytic pathways, and to serve as an adapter for UPF1 to protein phosphatase 2A (PP2A), thereby triggering UPF1 dephosphorylation. The chain is Nonsense-mediated mRNA decay factor SMG7 from Homo sapiens (Human).